A 147-amino-acid chain; its full sequence is Large ribosomal subunit protein uL15 (147 aa).

Over residues 1–12 (MTLRLNDLKPAD) the composition is skewed to basic and acidic residues. Residues 1-61 (MTLRLNDLKP…GFEGGQTPMQ (61 aa)) form a disordered region. A compositionally biased stretch (gly residues) spans 23-33 (RGIGSGLGKTA). Residues 34 to 47 (GRGHKGSFARKGGG) show a composition bias toward basic residues.

Belongs to the universal ribosomal protein uL15 family. As to quaternary structure, part of the 50S ribosomal subunit.

Binds to the 23S rRNA. This is Large ribosomal subunit protein uL15 from Xanthomonas oryzae pv. oryzae (strain MAFF 311018).